The primary structure comprises 137 residues: Large ribosomal subunit protein uL16 (137 aa).

Belongs to the universal ribosomal protein uL16 family. Part of the 50S ribosomal subunit.

Its function is as follows. Binds 23S rRNA and is also seen to make contacts with the A and possibly P site tRNAs. The polypeptide is Large ribosomal subunit protein uL16 (Rhodopseudomonas palustris (strain ATCC BAA-98 / CGA009)).